Reading from the N-terminus, the 208-residue chain is Protein-L-isoaspartate O-methyltransferase (208 aa).

Residue Ser-59 is part of the active site.

The protein belongs to the methyltransferase superfamily. L-isoaspartyl/D-aspartyl protein methyltransferase family.

The protein resides in the cytoplasm. The enzyme catalyses [protein]-L-isoaspartate + S-adenosyl-L-methionine = [protein]-L-isoaspartate alpha-methyl ester + S-adenosyl-L-homocysteine. Its function is as follows. Catalyzes the methyl esterification of L-isoaspartyl residues in peptides and proteins that result from spontaneous decomposition of normal L-aspartyl and L-asparaginyl residues. It plays a role in the repair and/or degradation of damaged proteins. This is Protein-L-isoaspartate O-methyltransferase from Salmonella paratyphi A (strain ATCC 9150 / SARB42).